Reading from the N-terminus, the 242-residue chain is Small ribosomal subunit protein uS2 (242 aa).

This sequence belongs to the universal ribosomal protein uS2 family.

This is Small ribosomal subunit protein uS2 from Shewanella denitrificans (strain OS217 / ATCC BAA-1090 / DSM 15013).